Reading from the N-terminus, the 253-residue chain is Tetraspanin-11 (253 aa).

Helical transmembrane passes span 19-39 (LLFI…AVGI), 63-83 (ILIF…GAII), and 93-113 (YFCL…LAHV). An N-linked (GlcNAc...) asparagine glycan is attached at asparagine 127. The chain crosses the membrane as a helical span at residues 220 to 240 (LLLMGAVGIGVACLQICGMVL).

Belongs to the tetraspanin (TM4SF) family.

It localises to the membrane. The chain is Tetraspanin-11 (Tspan11) from Mus musculus (Mouse).